A 335-amino-acid polypeptide reads, in one-letter code: tRNA (guanine(6)-N2)-methyltransferase (335 aa).

Residues 47-150 (EALGLRLAHH…GEEAFLGVQL (104 aa)) form the THUMP domain. S-adenosyl-L-methionine is bound by residues 195 to 197 (SGT), 243 to 244 (DA), and Asn-260.

It belongs to the methyltransferase superfamily. As to quaternary structure, monomer in solution.

The protein localises to the cytoplasm. The enzyme catalyses guanosine(6) in tRNA + S-adenosyl-L-methionine = N(2)-methylguanosine(6) in tRNA + S-adenosyl-L-homocysteine + H(+). Its function is as follows. S-adenosyl-L-methionine-dependent methyltransferase that catalyzes the methylation of the guanosine nucleotide at position 6 (m2G6) in tRNA(Phe). This chain is tRNA (guanine(6)-N2)-methyltransferase, found in Thermus thermophilus (strain ATCC BAA-163 / DSM 7039 / HB27).